A 189-amino-acid polypeptide reads, in one-letter code: Peptidyl-tRNA hydrolase (189 aa).

Tyr14 is a tRNA binding site. Residue His19 is the Proton acceptor of the active site. The tRNA site is built by Tyr64, Asn66, and Asn112.

Belongs to the PTH family. Monomer.

Its subcellular location is the cytoplasm. It catalyses the reaction an N-acyl-L-alpha-aminoacyl-tRNA + H2O = an N-acyl-L-amino acid + a tRNA + H(+). Hydrolyzes ribosome-free peptidyl-tRNAs (with 1 or more amino acids incorporated), which drop off the ribosome during protein synthesis, or as a result of ribosome stalling. In terms of biological role, catalyzes the release of premature peptidyl moieties from peptidyl-tRNA molecules trapped in stalled 50S ribosomal subunits, and thus maintains levels of free tRNAs and 50S ribosomes. The polypeptide is Peptidyl-tRNA hydrolase (Brevibacillus brevis (strain 47 / JCM 6285 / NBRC 100599)).